The chain runs to 531 residues: Protein arginine N-methyltransferase 3 (531 aa).

The disordered stretch occupies residues 1–43 (MCSLASGATGGRGAVENEEDLPELSDSGDEAAWEDEDDADLPH). C2 bears the N-acetylcysteine mark. Positions 16-39 (ENEEDLPELSDSGDEAAWEDEDDA) are enriched in acidic residues. Phosphoserine is present on residues S25 and S27. The C2H2-type zinc finger occupies 48-71 (TPCLFCNRLFTSAEETFSHCKSEH). An interaction with ZNF200 region spans residues 48–71 (TPCLFCNRLFTSAEETFSHCKSEH). S171 is subject to Phosphoserine. The segment at 186 to 531 (MKQFAQDFVM…NNSTQTYGLQ (346 aa)) is mediates interaction with ALDH1A1. In terms of domain architecture, SAM-dependent MTase PRMT-type spans 217–531 (DGVYFSSYGH…NNSTQTYGLQ (315 aa)). S-adenosyl-L-homocysteine contacts are provided by R239, G263, D285, I313, and E314. Residues E329 and E338 contribute to the active site. S343 provides a ligand contact to S-adenosyl-L-homocysteine.

It belongs to the class I-like SAM-binding methyltransferase superfamily. Protein arginine N-methyltransferase family. In terms of assembly, monomer and homodimer. Interacts with EPB41L3 (via FERM domain); the interaction is direct and inhibits the protein-arginine N-methyltransferase activity of PRMT3. Interacts with the 40S ribosomal protein RPS2. Interacts with ALDH1A1; the interaction is direct, inhibits ALDH1A1 aldehyde dehydrogenase activity and is independent of the methyltransferase activity of PRMT3. Interacts (via zinc-finger) with ZNF200 (via C-terminus); the interaction is direct and required to localize PRMT3 to the nucleus and inhibit its proteasomal degradation.

The protein resides in the cytoplasm. The protein localises to the cytosol. Its subcellular location is the nucleus. The enzyme catalyses L-arginyl-[protein] + S-adenosyl-L-methionine = N(omega)-methyl-L-arginyl-[protein] + S-adenosyl-L-homocysteine + H(+). It catalyses the reaction L-arginyl-[protein] + 2 S-adenosyl-L-methionine = N(omega),N(omega)-dimethyl-L-arginyl-[protein] + 2 S-adenosyl-L-homocysteine + 2 H(+). Inhibited by N-ethylmaleimide and high concentrations of zinc chloride. Allosterically inhibited by SGC707. Allosterically inhibited by (1-(benzo[d][1,2,3]thiadiazol- 6-yl)-3-(2-cyclohexenylethyl)urea) and derivatives thereof. Protein-arginine N-methyltransferase that catalyzes both the monomethylation and asymmetric dimethylation of the guanidino nitrogens of arginine residues in target proteins, and therefore falls into the group of type I methyltransferases. Catalyzes the asymmetric arginine dimethylation at multiple sites in the Arg/Gly-rich region of small ribosomal subunit protein uS5/RPS2. Also appears to methylate other ribosomal proteins. May regulate retinoic acid synthesis and signaling by inhibiting ALDH1A1 retinal dehydrogenase activity. Contributes to methylation of histone H4 'Arg-3', a specific tag for epigenetic transcriptional activation. Mediates asymmetric arginine dimethylation of histone H4 'Arg-3' (H4R3me2a) in the promoter region of miRNA miR-3648, to promote its transcription and osteogenesis. This chain is Protein arginine N-methyltransferase 3, found in Homo sapiens (Human).